A 179-amino-acid chain; its full sequence is D-glycero-beta-D-manno-heptose-1,7-bisphosphate 7-phosphatase (179 aa).

Residue Asp7 is the Nucleophile of the active site. The Mg(2+) site is built by Asp7 and Asp9. Asp7 contributes to the substrate binding site. The active-site Proton donor is Asp9. Substrate is bound by residues 15–19 (DSDAF), 50–53 (TNQS), and Arg57. Cys89, His91, Cys97, and Cys99 together coordinate Zn(2+). Arg100 contacts substrate. Asp126 lines the Mg(2+) pocket. Residue Arg129 participates in substrate binding.

In terms of assembly, monomer. The cofactor is Mg(2+). Zn(2+) is required as a cofactor.

Its subcellular location is the cytoplasm. It catalyses the reaction D-glycero-beta-D-manno-heptose 1,7-bisphosphate + H2O = D-glycero-beta-D-manno-heptose 1-phosphate + phosphate. The protein operates within nucleotide-sugar biosynthesis; ADP-L-glycero-beta-D-manno-heptose biosynthesis; ADP-L-glycero-beta-D-manno-heptose from D-glycero-beta-D-manno-heptose 7-phosphate: step 2/4. It participates in bacterial outer membrane biogenesis; LPS core biosynthesis. Its function is as follows. Converts the D-glycero-beta-D-manno-heptose 1,7-bisphosphate (beta-HBP) intermediate into D-glycero-beta-D-manno-heptose 1-phosphate by removing the phosphate group at the C-7 position. This chain is D-glycero-beta-D-manno-heptose-1,7-bisphosphate 7-phosphatase, found in Bordetella bronchiseptica (strain ATCC BAA-588 / NCTC 13252 / RB50) (Alcaligenes bronchisepticus).